The following is a 391-amino-acid chain: Ferrochelatase (391 aa).

Residues His196 and Glu281 each coordinate Fe cation.

Belongs to the ferrochelatase family.

The protein localises to the cytoplasm. It carries out the reaction heme b + 2 H(+) = protoporphyrin IX + Fe(2+). Its pathway is porphyrin-containing compound metabolism; protoheme biosynthesis; protoheme from protoporphyrin-IX: step 1/1. Functionally, catalyzes the ferrous insertion into protoporphyrin IX. In Synechococcus sp. (strain CC9311), this protein is Ferrochelatase.